The sequence spans 162 residues: D-aminoacyl-tRNA deacylase (162 aa).

The Gly-cisPro motif, important for rejection of L-amino acids motif lies at 145–146 (GP).

This sequence belongs to the DTD family. Homodimer.

The protein resides in the cytoplasm. It catalyses the reaction glycyl-tRNA(Ala) + H2O = tRNA(Ala) + glycine + H(+). It carries out the reaction a D-aminoacyl-tRNA + H2O = a tRNA + a D-alpha-amino acid + H(+). Its function is as follows. An aminoacyl-tRNA editing enzyme that deacylates mischarged D-aminoacyl-tRNAs. Also deacylates mischarged glycyl-tRNA(Ala), protecting cells against glycine mischarging by AlaRS. Acts via tRNA-based rather than protein-based catalysis; rejects L-amino acids rather than detecting D-amino acids in the active site. By recycling D-aminoacyl-tRNA to D-amino acids and free tRNA molecules, this enzyme counteracts the toxicity associated with the formation of D-aminoacyl-tRNA entities in vivo and helps enforce protein L-homochirality. The protein is D-aminoacyl-tRNA deacylase of Bifidobacterium longum (strain DJO10A).